A 557-amino-acid chain; its full sequence is MEALGNFDYESYTNFTKLPSSQWGDQFLKFSIADSDFDVLEREIEVLKPKVRENIFVSSSTDKDAMKKTILSIHFLDSLGLSYHFEKEIEESLKHAFEKIEDLIADENKLHTISTIFRVFRTYGYYMSSDVFKIFKGDDGKFKESLIEDVKGMLSFYEAVHFGTTTDHILDEALSFTLNHLESLATGRRASPPHISKLIQNALHIPQHRNIQALVAREYISFYEHEEDHDETLLKLAKLNFKFLQLHYFQELKTITMWWTKLDHTSNLPPNFRERTVETWFAALMMYFEPQFSLGRIMSAKLYLVITFLDDACDTYGSISEVESLADCLERWDPDYMENLQGHMKTAFKFVMYLFKEYEEILRSQGRSFVLEKMIEEFKIIARKNLELVKWARGGHVPSFDEYIESGGAEIGTYATIACSIMGLGEIGKKEAFEWLISRPKLVRILGAKTRLMDDIADFEEDMEKGYTANALNYYMNEHGVTKEEASRELEKMNGDMNKIVNEECLKITTMPRRILMQSVNYARSLDVLYTADDVYNHREGKLKEYMRLLLVDPILL.

The (2E,6E)-farnesyl diphosphate site is built by arginine 273, aspartate 310, aspartate 314, arginine 451, and aspartate 454. Aspartate 310 and aspartate 314 together coordinate Mg(2+). Positions 310 to 314 match the DDXXD motif motif; the sequence is DDACD. Residues aspartate 454, aspartate 455, and aspartate 462 each coordinate Mg(2+).

This sequence belongs to the terpene synthase family. Tpsa subfamily. Monomer. Mg(2+) serves as cofactor. Mn(2+) is required as a cofactor. Expressed exclusively in flowers. Expressed in intrafloral nectaries and in the funiculus within the ovules.

It localises to the cytoplasm. The catalysed reaction is (2E,6E)-farnesyl diphosphate = (+)-alpha-barbatene + diphosphate. The enzyme catalyses (2E,6E)-farnesyl diphosphate = (+)-thujopsene + diphosphate. It catalyses the reaction (2E,6E)-farnesyl diphosphate = (+)-beta-chamigrene + diphosphate. It carries out the reaction (2E,6E)-farnesyl diphosphate = (+)-beta-barbatene + diphosphate. The catalysed reaction is (2E,6E)-farnesyl diphosphate = beta-sesquiphellandrene + diphosphate. The enzyme catalyses (2E,6E)-farnesyl diphosphate = (S)-beta-bisabolene + diphosphate. It catalyses the reaction (2E,6E)-farnesyl diphosphate = (-)-alpha-cuprenene + diphosphate. It carries out the reaction (2E,6E)-farnesyl diphosphate = alpha-zingiberene + diphosphate. The catalysed reaction is (2E,6E)-farnesyl diphosphate = beta-acoradiene + diphosphate. The enzyme catalyses (2E,6E)-farnesyl diphosphate = (E)-beta-farnesene + diphosphate. The protein operates within secondary metabolite biosynthesis; terpenoid biosynthesis. In terms of biological role, involved in the biosynthesis of over 15 sesquiterpenes (C15). The major products are (+)-alpha-barbatene (27.3%), (+)-thujopsene (17.8%) and (+)-beta-chamigrene (9.9%). Can use farnesyl diphosphate or geranyl diphosphate as substrates, but not geranylgeranyl diphosphate. The sequence is that of Alpha-barbatene synthase from Arabidopsis thaliana (Mouse-ear cress).